The sequence spans 152 residues: B3 domain-containing protein At1g10455 (152 aa).

The TF-B3 DNA-binding region spans 24-131; sequence LKKKLSDSDL…EVKFKHFKSQ (108 aa).

The protein localises to the nucleus. The chain is B3 domain-containing protein At1g10455 from Arabidopsis thaliana (Mouse-ear cress).